The sequence spans 704 residues: Glycine--tRNA ligase beta subunit (704 aa).

It belongs to the class-II aminoacyl-tRNA synthetase family. In terms of assembly, tetramer of two alpha and two beta subunits.

It is found in the cytoplasm. The catalysed reaction is tRNA(Gly) + glycine + ATP = glycyl-tRNA(Gly) + AMP + diphosphate. In Rhizobium etli (strain CIAT 652), this protein is Glycine--tRNA ligase beta subunit.